A 214-amino-acid polypeptide reads, in one-letter code: Glutathione S-transferase 1 (214 aa).

One can recognise a GST N-terminal domain in the interval A2–L83. Glutathione is bound by residues S12, H41 to K42, Q54 to V55, and E67 to S68. Residues N88–A214 form the GST C-terminal domain.

The protein belongs to the GST superfamily. Phi family. As to quaternary structure, homodimer or heterodimer of GST-I and GST-IV (=GST-II). In terms of tissue distribution, expressed in the stem and leaves, lower levels are seen in the pollen and endosperm.

It carries out the reaction RX + glutathione = an S-substituted glutathione + a halide anion + H(+). In terms of biological role, conjugation of reduced glutathione to a wide number of exogenous and endogenous hydrophobic electrophiles. Involved in the detoxification of certain herbicides. The protein is Glutathione S-transferase 1 (GST1) of Zea mays (Maize).